We begin with the raw amino-acid sequence, 378 residues long: tRNA-specific 2-thiouridylase MnmA (378 aa).

Residues 9–16 (GVSGGVDS) and Met-35 each bind ATP. The interval 94-96 (NPD) is interaction with target base in tRNA. Cys-99 acts as the Nucleophile in catalysis. A disulfide bond links Cys-99 and Cys-195. Gly-123 contacts ATP. Residues 145–147 (KDQ) are interaction with tRNA. Cys-195 acts as the Cysteine persulfide intermediate in catalysis. The interaction with tRNA stretch occupies residues 307–308 (RY).

The protein belongs to the MnmA/TRMU family.

It is found in the cytoplasm. It catalyses the reaction S-sulfanyl-L-cysteinyl-[protein] + uridine(34) in tRNA + AH2 + ATP = 2-thiouridine(34) in tRNA + L-cysteinyl-[protein] + A + AMP + diphosphate + H(+). In terms of biological role, catalyzes the 2-thiolation of uridine at the wobble position (U34) of tRNA, leading to the formation of s(2)U34. The polypeptide is tRNA-specific 2-thiouridylase MnmA (Xanthomonas campestris pv. campestris (strain 8004)).